Here is a 258-residue protein sequence, read N- to C-terminus: 2-succinyl-6-hydroxy-2,4-cyclohexadiene-1-carboxylate synthase (258 aa).

The protein belongs to the AB hydrolase superfamily. MenH family. In terms of assembly, monomer.

The enzyme catalyses 5-enolpyruvoyl-6-hydroxy-2-succinyl-cyclohex-3-ene-1-carboxylate = (1R,6R)-6-hydroxy-2-succinyl-cyclohexa-2,4-diene-1-carboxylate + pyruvate. It functions in the pathway quinol/quinone metabolism; 1,4-dihydroxy-2-naphthoate biosynthesis; 1,4-dihydroxy-2-naphthoate from chorismate: step 3/7. The protein operates within quinol/quinone metabolism; menaquinone biosynthesis. Catalyzes a proton abstraction reaction that results in 2,5-elimination of pyruvate from 2-succinyl-5-enolpyruvyl-6-hydroxy-3-cyclohexene-1-carboxylate (SEPHCHC) and the formation of 2-succinyl-6-hydroxy-2,4-cyclohexadiene-1-carboxylate (SHCHC). This chain is 2-succinyl-6-hydroxy-2,4-cyclohexadiene-1-carboxylate synthase, found in Enterobacter sp. (strain 638).